The chain runs to 142 residues: Universal stress protein D (142 aa).

This sequence belongs to the universal stress protein A family.

It is found in the cytoplasm. Its function is as follows. Required for resistance to DNA-damaging agents. The sequence is that of Universal stress protein D (uspD) from Escherichia coli O157:H7.